Consider the following 425-residue polypeptide: Serine--tRNA ligase (425 aa).

229-231 is a binding site for L-serine; sequence TAE. ATP is bound at residue 260-262; it reads RSE. Glutamate 283 contacts L-serine. Residue 347–350 participates in ATP binding; it reads EISS. L-serine is bound at residue serine 384.

This sequence belongs to the class-II aminoacyl-tRNA synthetase family. Type-1 seryl-tRNA synthetase subfamily. In terms of assembly, homodimer. The tRNA molecule binds across the dimer.

It localises to the cytoplasm. It catalyses the reaction tRNA(Ser) + L-serine + ATP = L-seryl-tRNA(Ser) + AMP + diphosphate + H(+). The catalysed reaction is tRNA(Sec) + L-serine + ATP = L-seryl-tRNA(Sec) + AMP + diphosphate + H(+). Its pathway is aminoacyl-tRNA biosynthesis; selenocysteinyl-tRNA(Sec) biosynthesis; L-seryl-tRNA(Sec) from L-serine and tRNA(Sec): step 1/1. Functionally, catalyzes the attachment of serine to tRNA(Ser). Is also able to aminoacylate tRNA(Sec) with serine, to form the misacylated tRNA L-seryl-tRNA(Sec), which will be further converted into selenocysteinyl-tRNA(Sec). The sequence is that of Serine--tRNA ligase from Rhizorhabdus wittichii (strain DSM 6014 / CCUG 31198 / JCM 15750 / NBRC 105917 / EY 4224 / RW1) (Sphingomonas wittichii).